We begin with the raw amino-acid sequence, 66 residues long: Large ribosomal subunit protein uL29 (66 aa).

It belongs to the universal ribosomal protein uL29 family.

In Borrelia duttonii (strain Ly), this protein is Large ribosomal subunit protein uL29.